A 331-amino-acid polypeptide reads, in one-letter code: Glucokinase (331 aa).

ATP is bound at residue glycine 16–threonine 21.

It belongs to the bacterial glucokinase family.

The protein resides in the cytoplasm. The catalysed reaction is D-glucose + ATP = D-glucose 6-phosphate + ADP + H(+). The sequence is that of Glucokinase from Pseudomonas aeruginosa (strain UCBPP-PA14).